Reading from the N-terminus, the 445-residue chain is Phosphoglucosamine mutase (445 aa).

Serine 102 (phosphoserine intermediate) is an active-site residue. Mg(2+)-binding residues include serine 102, aspartate 241, aspartate 243, and aspartate 245. A Phosphoserine modification is found at serine 102.

Belongs to the phosphohexose mutase family. It depends on Mg(2+) as a cofactor. In terms of processing, activated by phosphorylation.

The enzyme catalyses alpha-D-glucosamine 1-phosphate = D-glucosamine 6-phosphate. Catalyzes the conversion of glucosamine-6-phosphate to glucosamine-1-phosphate. In Rhodococcus erythropolis (strain PR4 / NBRC 100887), this protein is Phosphoglucosamine mutase.